An 83-amino-acid polypeptide reads, in one-letter code: Neurotoxin 3FTx-RI (83 aa).

The signal sequence occupies residues 1 to 21 (MKTLLLTLVVLTIVCLDLGHT). Disulfide bonds link Cys24–Cys45, Cys38–Cys62, Cys64–Cys75, and Cys76–Cys81.

Belongs to the three-finger toxin family. Short-chain subfamily. Type I alpha-neurotoxin sub-subfamily. As to expression, expressed by the venom gland.

Its subcellular location is the secreted. Its function is as follows. Binds to muscle nicotinic acetylcholine receptor (nAChR) and inhibit acetylcholine from binding to the receptor, thereby impairing neuromuscular transmission. The chain is Neurotoxin 3FTx-RI from Bungarus fasciatus (Banded krait).